A 199-amino-acid polypeptide reads, in one-letter code: Large ribosomal subunit protein bL25 (199 aa).

This sequence belongs to the bacterial ribosomal protein bL25 family. CTC subfamily. As to quaternary structure, part of the 50S ribosomal subunit; part of the 5S rRNA/L5/L18/L25 subcomplex. Contacts the 5S rRNA. Binds to the 5S rRNA independently of L5 and L18.

In terms of biological role, this is one of the proteins that binds to the 5S RNA in the ribosome where it forms part of the central protuberance. The polypeptide is Large ribosomal subunit protein bL25 (Caulobacter sp. (strain K31)).